The primary structure comprises 973 residues: MPIKLIQVQRKLNVGINTVVEFLHRNGFSVEDNPNTRISDEQYALLVKEFGKDLPEKDRNFAADRMRKEVPSVKEEKTAEIKTVIPEEFRPKIVMKGHIDLDGGQHKKQQEEPKAKEEPKVKEEPKVKEEPKVKEAPAAPAAQAPVKPAQPAQAPTEKKEEKVIVVEVEKEKTVEKQPVVAEPKVESVKPEQEVEKTEEKDDNLFRLNSVKLESKIKVTGKIDLDALNQSTRPKKKTKEEKRKERDEKQKFNNNRPGNNSNGPGAPHKSPNSPTLIKPNAPAKPGEEGDAKKKRKRIKKDRVDVNNTPGTNYPRPNRDDRPNNDRKPRLKKPVKAEVSEEDVQKQIKETLARLTNKNNKNNKGAKYRRDKRDAAVKREHELMEQEELESKVLKLTEFVTANDLANMMDVSVTEVIGTCMSIGLMVSINQRLDAETINIVAEEFGYKTEYVSADVVEAINADEEDDNEEDWVARPPIVTVMGHVDHGKTSLLDNIRSANVIAGEAGGITQHIGAYNVKLQNGRRITFLDTPGHEAFTAMRARGAKVTDIAIIIVAADDNVMPQTIEAINHASAAGVPIVFAINKIDKPHANPEKIKEELANMNYLVEDWGGKYQSQEISAKKGIGVEELLEKVLLEADLLDLKANPKKRAVGSIIESSLDKGRGYVSTILVENGTLKMGDIVLAGTHQGRIKAMFNERNQRVEKAGPSEPVLILGLNGAPQAGDTFNVLETEQEAREIANRREQLQRELGLRTQKMLTLDDIGRRIAVGNFQELNVIVKGDVDGSVEALSDSLIRLSTEEIQVNVIHKAVGQISESDVVLAAASNAIIIGFQVRPSLQARRNAEKEGVEIRLYSIIYDAIEEVKSAMEGMLSPEIKEEITAYVEVQQVFKITKVGTVAGCMVKEGKIKRTNKIRLIRDGIVIYAGELGSLKRFKDDAKEVVAGLDCGLNITNFNDIQVGDMIEAYEETEIKKTL.

A compositionally biased stretch (basic and acidic residues) spans 97–135 (GHIDLDGGQHKKQQEEPKAKEEPKVKEEPKVKEEPKVKE). Disordered stretches follow at residues 97–343 (GHID…EDVQ) and 353–372 (LTNK…DKRD). Over residues 136 to 155 (APAAPAAQAPVKPAQPAQAP) the composition is skewed to low complexity. Basic and acidic residues-rich tracts occupy residues 156 to 175 (TEKK…KTVE), 183 to 204 (PKVE…DDNL), 212 to 224 (LESK…KIDL), and 237 to 250 (TKEE…EKQK). The span at 252 to 266 (NNNRPGNNSNGPGAP) shows a compositional bias: low complexity. 2 stretches are compositionally biased toward basic and acidic residues: residues 315-326 (PNRDDRPNNDRK) and 333-343 (VKAEVSEEDVQ). Residues 472–642 (ARPPIVTVMG…LLEADLLDLK (171 aa)) form the tr-type G domain. The G1 stretch occupies residues 481–488 (GHVDHGKT). 481-488 (GHVDHGKT) contacts GTP. Residues 506–510 (GITQH) are G2. The G3 stretch occupies residues 528–531 (DTPG). GTP-binding positions include 528–532 (DTPGH) and 582–585 (NKID). The interval 582-585 (NKID) is G4. Residues 618–620 (SAK) form a G5 region.

This sequence belongs to the TRAFAC class translation factor GTPase superfamily. Classic translation factor GTPase family. IF-2 subfamily.

Its subcellular location is the cytoplasm. Its function is as follows. One of the essential components for the initiation of protein synthesis. Protects formylmethionyl-tRNA from spontaneous hydrolysis and promotes its binding to the 30S ribosomal subunits. Also involved in the hydrolysis of GTP during the formation of the 70S ribosomal complex. This chain is Translation initiation factor IF-2, found in Parabacteroides distasonis (strain ATCC 8503 / DSM 20701 / CIP 104284 / JCM 5825 / NCTC 11152).